Consider the following 368-residue polypeptide: Chaperone protein DnaJ (368 aa).

The J domain occupies D5–G75. The segment at G139–K222 adopts a CR-type zinc-finger fold. Zn(2+) is bound by residues C152, C155, C169, C172, C196, C199, C210, and C213. 4 CXXCXGXG motif repeats span residues C152 to G159, C169 to G176, C196 to G203, and C210 to T217.

The protein belongs to the DnaJ family. Homodimer. Zn(2+) is required as a cofactor.

The protein resides in the cytoplasm. Participates actively in the response to hyperosmotic and heat shock by preventing the aggregation of stress-denatured proteins and by disaggregating proteins, also in an autonomous, DnaK-independent fashion. Unfolded proteins bind initially to DnaJ; upon interaction with the DnaJ-bound protein, DnaK hydrolyzes its bound ATP, resulting in the formation of a stable complex. GrpE releases ADP from DnaK; ATP binding to DnaK triggers the release of the substrate protein, thus completing the reaction cycle. Several rounds of ATP-dependent interactions between DnaJ, DnaK and GrpE are required for fully efficient folding. Also involved, together with DnaK and GrpE, in the DNA replication of plasmids through activation of initiation proteins. The sequence is that of Chaperone protein DnaJ from Mesomycoplasma hyopneumoniae (strain 232) (Mycoplasma hyopneumoniae).